The chain runs to 269 residues: 3-methyl-2-oxobutanoate hydroxymethyltransferase (269 aa).

Asp-48 and Asp-87 together coordinate Mg(2+). Residues 48–49 (DS), Asp-87, and Lys-116 each bind 3-methyl-2-oxobutanoate. Residue Glu-118 participates in Mg(2+) binding. The active-site Proton acceptor is the Glu-185.

It belongs to the PanB family. Homodecamer; pentamer of dimers. Requires Mg(2+) as cofactor.

Its subcellular location is the cytoplasm. It carries out the reaction 3-methyl-2-oxobutanoate + (6R)-5,10-methylene-5,6,7,8-tetrahydrofolate + H2O = 2-dehydropantoate + (6S)-5,6,7,8-tetrahydrofolate. Its pathway is cofactor biosynthesis; (R)-pantothenate biosynthesis; (R)-pantoate from 3-methyl-2-oxobutanoate: step 1/2. Catalyzes the reversible reaction in which hydroxymethyl group from 5,10-methylenetetrahydrofolate is transferred onto alpha-ketoisovalerate to form ketopantoate. The sequence is that of 3-methyl-2-oxobutanoate hydroxymethyltransferase from Campylobacter curvus (strain 525.92).